Reading from the N-terminus, the 69-residue chain is Sec-independent protein translocase protein TatA (69 aa).

The helical transmembrane segment at 1 to 21 threads the bilayer; the sequence is MFGLGTMEMVIILVIVLVIFG. The segment at 44 to 69 is disordered; it reads NAEDDAPAEPEVSKPAAAESTEKKDA.

Belongs to the TatA/E family. The Tat system comprises two distinct complexes: a TatABC complex, containing multiple copies of TatA, TatB and TatC subunits, and a separate TatA complex, containing only TatA subunits. Substrates initially bind to the TatABC complex, which probably triggers association of the separate TatA complex to form the active translocon.

Its subcellular location is the cell inner membrane. Its function is as follows. Part of the twin-arginine translocation (Tat) system that transports large folded proteins containing a characteristic twin-arginine motif in their signal peptide across membranes. TatA could form the protein-conducting channel of the Tat system. The chain is Sec-independent protein translocase protein TatA from Magnetococcus marinus (strain ATCC BAA-1437 / JCM 17883 / MC-1).